The primary structure comprises 353 residues: Photosystem II D2 protein (353 aa).

Thr-2 is subject to N-acetylthreonine. At Thr-2 the chain carries Phosphothreonine. A helical transmembrane segment spans residues 41–61 (CAYFALGGWFTGTTFVTSWYT). His-118 is a chlorophyll a binding site. Residues 125–141 (GFMLRQFELARSVQLRP) traverse the membrane as a helical segment. 2 residues coordinate pheophytin a: Gln-130 and Asn-143. A helical transmembrane segment spans residues 153-166 (VFVSVFLIYPLGQS). His-198 is a chlorophyll a binding site. The helical transmembrane segment at 208-228 (AALLCAIHGATVENTLFEDGD) threads the bilayer. His-215 and Phe-262 together coordinate a plastoquinone. Residue His-215 coordinates Fe cation. His-269 contributes to the Fe cation binding site. The chain crosses the membrane as a helical span at residues 279 to 295 (GLWMSALGVVGLALNLR).

Belongs to the reaction center PufL/M/PsbA/D family. In terms of assembly, PSII is composed of 1 copy each of membrane proteins PsbA, PsbB, PsbC, PsbD, PsbE, PsbF, PsbH, PsbI, PsbJ, PsbK, PsbL, PsbM, PsbT, PsbX, PsbY, PsbZ, Psb30/Ycf12, at least 3 peripheral proteins of the oxygen-evolving complex and a large number of cofactors. It forms dimeric complexes. It depends on The D1/D2 heterodimer binds P680, chlorophylls that are the primary electron donor of PSII, and subsequent electron acceptors. It shares a non-heme iron and each subunit binds pheophytin, quinone, additional chlorophylls, carotenoids and lipids. There is also a Cl(-1) ion associated with D1 and D2, which is required for oxygen evolution. The PSII complex binds additional chlorophylls, carotenoids and specific lipids. as a cofactor.

Its subcellular location is the plastid. It is found in the chloroplast thylakoid membrane. The catalysed reaction is 2 a plastoquinone + 4 hnu + 2 H2O = 2 a plastoquinol + O2. Its function is as follows. Photosystem II (PSII) is a light-driven water:plastoquinone oxidoreductase that uses light energy to abstract electrons from H(2)O, generating O(2) and a proton gradient subsequently used for ATP formation. It consists of a core antenna complex that captures photons, and an electron transfer chain that converts photonic excitation into a charge separation. The D1/D2 (PsbA/PsbD) reaction center heterodimer binds P680, the primary electron donor of PSII as well as several subsequent electron acceptors. D2 is needed for assembly of a stable PSII complex. The protein is Photosystem II D2 protein of Spinacia oleracea (Spinach).